A 942-amino-acid chain; its full sequence is Glutamyl aminopeptidase (942 aa).

The Cytoplasmic segment spans residues 1 to 14 (MSTDSKRYCIKTKH). A helical; Signal-anchor for type II membrane protein transmembrane segment spans residues 15-35 (VAIICAAVVAVGLIVGLSVGL). Over 36–942 (TRSCDSKDGG…RDTIRDWFFN (907 aa)) the chain is Extracellular. The tract at residues 40 to 74 (DSKDGGQGTTQSPSHLPPTSSPPQDQGVCPASEDE) is disordered. N-linked (GlcNAc...) asparagine glycosylation is found at Asn-110, Asn-114, and Asn-187. A substrate-binding site is contributed by Glu-213. An N-linked (GlcNAc...) asparagine glycan is attached at Asn-314. 347–351 (GAMEN) is a binding site for substrate. A glycan (N-linked (GlcNAc...) asparagine) is linked at Asn-367. Zn(2+) is bound at residue His-383. Glu-384 functions as the Proton acceptor in the catalytic mechanism. Zn(2+) is bound by residues His-387 and Glu-406. Residues Asn-557, Asn-579, Asn-587, Asn-597, Asn-632, Asn-668, Asn-753, Asn-786, and Asn-791 are each glycosylated (N-linked (GlcNAc...) asparagine). A substrate-binding site is contributed by Arg-877.

It belongs to the peptidase M1 family. As to quaternary structure, homodimer; disulfide-linked. The cofactor is Zn(2+).

It is found in the cell membrane. The catalysed reaction is Release of N-terminal glutamate (and to a lesser extent aspartate) from a peptide.. Substrate specificity is modulated by calcium which enhances the enzymatic activity for cleavage of acidic residues while reducing its activity with basic residues. Inhibited by aminopeptidase inhibitors amastatin and bestatin. Functionally, regulates central hypertension through its calcium-modulated preference to cleave N-terminal acidic residues from peptides such as angiotensin II. The sequence is that of Glutamyl aminopeptidase (ENPEP) from Sus scrofa (Pig).